The sequence spans 177 residues: Bifunctional protein PyrR (177 aa).

The PRPP-binding motif lies at 99–111; sequence VVLVDDVLFTGRT.

This sequence belongs to the purine/pyrimidine phosphoribosyltransferase family. PyrR subfamily.

The enzyme catalyses UMP + diphosphate = 5-phospho-alpha-D-ribose 1-diphosphate + uracil. Regulates the transcription of the pyrimidine nucleotide (pyr) operon in response to exogenous pyrimidines. In terms of biological role, also displays a weak uracil phosphoribosyltransferase activity which is not physiologically significant. The sequence is that of Bifunctional protein PyrR from Geobacter sulfurreducens (strain ATCC 51573 / DSM 12127 / PCA).